A 192-amino-acid polypeptide reads, in one-letter code: MPIILGIDPGSRVTGYGVIRQTGRHLEYLGSGAIRTSVDDLPTRLKRIYAGVTEIITQFHPDMFAIEQVFMAKNADSALKLGQARGTAIVAAVNHDLPVFEYAARLVKQTVTGIGSADKIQVQDMVTRMLQLSSKPQADAADALAIAITHAHSIQHSLIVAKQSDQKVGSDKEQILALMKTRYSRGRFRLKG.

Catalysis depends on residues D8, E67, and D139. Mg(2+)-binding residues include D8, E67, and D139.

This sequence belongs to the RuvC family. Homodimer which binds Holliday junction (HJ) DNA. The HJ becomes 2-fold symmetrical on binding to RuvC with unstacked arms; it has a different conformation from HJ DNA in complex with RuvA. In the full resolvosome a probable DNA-RuvA(4)-RuvB(12)-RuvC(2) complex forms which resolves the HJ. Mg(2+) is required as a cofactor.

It is found in the cytoplasm. The enzyme catalyses Endonucleolytic cleavage at a junction such as a reciprocal single-stranded crossover between two homologous DNA duplexes (Holliday junction).. The RuvA-RuvB-RuvC complex processes Holliday junction (HJ) DNA during genetic recombination and DNA repair. Endonuclease that resolves HJ intermediates. Cleaves cruciform DNA by making single-stranded nicks across the HJ at symmetrical positions within the homologous arms, yielding a 5'-phosphate and a 3'-hydroxyl group; requires a central core of homology in the junction. The consensus cleavage sequence is 5'-(A/T)TT(C/G)-3'. Cleavage occurs on the 3'-side of the TT dinucleotide at the point of strand exchange. HJ branch migration catalyzed by RuvA-RuvB allows RuvC to scan DNA until it finds its consensus sequence, where it cleaves and resolves the cruciform DNA. The protein is Crossover junction endodeoxyribonuclease RuvC of Actinobacillus pleuropneumoniae serotype 5b (strain L20).